Here is a 518-residue protein sequence, read N- to C-terminus: Chromosomal replication initiator protein DnaA (518 aa).

The segment at 1 to 72 (MTLAEFWPLC…VREELAAGRS (72 aa)) is domain I, interacts with DnaA modulators. The domain II stretch occupies residues 72–180 (SAFVFKPGEG…DAEEARYEQT (109 aa)). The domain III, AAA+ region stretch occupies residues 181 to 397 (NLSPDYTFDT…GAFNRVGASS (217 aa)). Glycine 225, glycine 227, lysine 228, and threonine 229 together coordinate ATP. The interval 398 to 518 (RFMNRPVIDI…YEKLLILIQN (121 aa)) is domain IV, binds dsDNA.

The protein belongs to the DnaA family. As to quaternary structure, oligomerizes as a right-handed, spiral filament on DNA at oriC.

It is found in the cytoplasm. Its function is as follows. Plays an essential role in the initiation and regulation of chromosomal replication. ATP-DnaA binds to the origin of replication (oriC) to initiate formation of the DNA replication initiation complex once per cell cycle. Binds the DnaA box (a 9 base pair repeat at the origin) and separates the double-stranded (ds)DNA. Forms a right-handed helical filament on oriC DNA; dsDNA binds to the exterior of the filament while single-stranded (ss)DNA is stabiized in the filament's interior. The ATP-DnaA-oriC complex binds and stabilizes one strand of the AT-rich DNA unwinding element (DUE), permitting loading of DNA polymerase. After initiation quickly degrades to an ADP-DnaA complex that is not apt for DNA replication. Binds acidic phospholipids. This is Chromosomal replication initiator protein DnaA from Neisseria meningitidis serogroup C / serotype 2a (strain ATCC 700532 / DSM 15464 / FAM18).